A 324-amino-acid polypeptide reads, in one-letter code: 4-hydroxy-2-oxoglutarate aldolase, mitochondrial (324 aa).

A mitochondrion-targeting transit peptide spans methionine 1–glutamine 22. Serine 74–asparagine 75 is a binding site for substrate. The active-site Schiff-base intermediate with substrate is the lysine 193. Residues serine 195 and glycine 219 each contribute to the substrate site.

It belongs to the DapA family. As to quaternary structure, homotetramer.

It is found in the mitochondrion. It catalyses the reaction (4S)-4-hydroxy-2-oxoglutarate = glyoxylate + pyruvate. The catalysed reaction is (4R)-4-hydroxy-2-oxoglutarate = glyoxylate + pyruvate. Its activity is regulated as follows. Inhibited by divalent cations. In terms of biological role, catalyzes the final step in the metabolic pathway of hydroxyproline. In Danio rerio (Zebrafish), this protein is 4-hydroxy-2-oxoglutarate aldolase, mitochondrial.